Here is a 365-residue protein sequence, read N- to C-terminus: Protein dbl-1 (365 aa).

A signal peptide spans 1–42 (MNDSVRTTTTISSTKSLVHSFQLSAILHLFLLISFTPMSAAA). Positions 43–244 (DQHASHATRR…KRSAQTGNSE (202 aa)) are excised as a propeptide. N-linked (GlcNAc...) asparagine glycosylation is found at Asn110, Asn143, and Asn167. Residues 231–259 (SVRRKRSAQTGNSERKNRKKGRKHHNTEA) are disordered. Over residues 246–255 (KNRKKGRKHH) the composition is skewed to basic residues. 3 cysteine pairs are disulfide-bonded: Cys264–Cys330, Cys293–Cys362, and Cys297–Cys364. The N-linked (GlcNAc...) asparagine glycan is linked to Asn306.

Belongs to the TGF-beta family. In terms of assembly, homodimer; disulfide-linked. Interacts with drag-1. In terms of tissue distribution, expressed in embryos just prior to hatching and remains constant in most cells throughout the larval and adult stages. Expressed by AVA command interneurons.

The protein localises to the secreted. In terms of biological role, ligand for the serine/threonine-protein kinase receptor type-1 sma-6 which activates a TGF-beta-like signaling pathway. Multifunctional protein that is involved in body size, male ectodermal patterning, innate immunity, lipid metabolism and neural plasticity. Dose-dependent regulator of body size, probably influencing the sizes of some or all cells rather than their number. Plays a role in patterning of male-specific genital sensilla (simple sense organs), known as rays, and mating-associated structures, spicules. Plays a protective role in response to infection by the Gram-negative bacterium S.marcescens, by activating expression of genes involved in innate immunity. Regulator of lipid homeostasis, acting non cell-autonomously in the hypodermis; partly dependent on the Insulin/IGF-1-like signaling (IIS) mediated pathway. Required for aversive olfactory learning of pathogenic bacteria in adults. Involved in gland cell morphology, possibly via activation of a Smad-independent TGF-beta signaling pathway. Required to oppose the autoregulation of expression of Runt-related transcription factor rnt-1. The protein is Protein dbl-1 of Caenorhabditis elegans.